The following is a 336-amino-acid chain: ATP-dependent 6-phosphofructokinase (336 aa).

Gly-11 contributes to the ATP binding site. ADP is bound at residue 21–25; the sequence is RAVVR. ATP is bound by residues 72 to 73 and 102 to 105; these read RY and GDGS. Asp-103 lines the Mg(2+) pocket. 125–127 serves as a coordination point for substrate; that stretch reads TID. The active-site Proton acceptor is Asp-127. Arg-154 provides a ligand contact to ADP. Substrate-binding positions include Arg-162 and 169–171; that span reads MGR. Residues 185-187, Lys-211, and 213-215 each bind ADP; these read GAD and KKH. Residues Glu-222, Arg-244, and 250–253 contribute to the substrate site; that span reads HIQR.

The protein belongs to the phosphofructokinase type A (PFKA) family. ATP-dependent PFK group I subfamily. Prokaryotic clade 'B1' sub-subfamily. In terms of assembly, homotetramer. Mg(2+) is required as a cofactor.

The protein localises to the cytoplasm. The catalysed reaction is beta-D-fructose 6-phosphate + ATP = beta-D-fructose 1,6-bisphosphate + ADP + H(+). It participates in carbohydrate degradation; glycolysis; D-glyceraldehyde 3-phosphate and glycerone phosphate from D-glucose: step 3/4. Its activity is regulated as follows. Allosterically activated by ADP and other diphosphonucleosides, and allosterically inhibited by phosphoenolpyruvate. Catalyzes the phosphorylation of D-fructose 6-phosphate to fructose 1,6-bisphosphate by ATP, the first committing step of glycolysis. The chain is ATP-dependent 6-phosphofructokinase from Streptococcus suis (strain 05ZYH33).